A 361-amino-acid polypeptide reads, in one-letter code: Transposase A from transposon Tn554 (361 aa).

The region spanning 23 to 120 (YQLIEPVMKF…VVMSFLDYLS (98 aa)) is the Core-binding (CB) domain. A Tyr recombinase domain is found at 163-351 (KQIRTLRSKE…SDQDMKNEFN (189 aa)). Residues arginine 198, lysine 232, histidine 302, arginine 305, and histidine 328 contribute to the active site. The active-site O-(3'-phospho-DNA)-tyrosine intermediate is tyrosine 338.

Belongs to the 'phage' integrase family.

One of three proteins encoded by transposon Tn554 required for its transposition. The chain is Transposase A from transposon Tn554 (tnpA1) from Staphylococcus aureus (strain Mu50 / ATCC 700699).